The chain runs to 270 residues: ParA family protein MPN_688 (270 aa).

Belongs to the ParA family.

In Mycoplasma pneumoniae (strain ATCC 29342 / M129 / Subtype 1) (Mycoplasmoides pneumoniae), this protein is ParA family protein MPN_688.